We begin with the raw amino-acid sequence, 332 residues long: Ribosomal RNA small subunit methyltransferase C (332 aa).

The protein belongs to the methyltransferase superfamily. RsmC family. In terms of assembly, monomer.

It localises to the cytoplasm. It carries out the reaction guanosine(1207) in 16S rRNA + S-adenosyl-L-methionine = N(2)-methylguanosine(1207) in 16S rRNA + S-adenosyl-L-homocysteine + H(+). Specifically methylates the guanine in position 1207 of 16S rRNA in the 30S particle. This chain is Ribosomal RNA small subunit methyltransferase C, found in Pseudomonas entomophila (strain L48).